Reading from the N-terminus, the 375-residue chain is Putative prophage phiRv2 integrase (375 aa).

One can recognise a Core-binding (CB) domain in the interval 75–153 (APFGEYAEGW…LLRAIMQTAL (79 aa)). One can recognise a Tyr recombinase domain in the interval 175–364 (HKIRPATLDE…AKGRDREIAA (190 aa)). Catalysis depends on residues Arg209, His316, Arg319, and His342. Tyr351 acts as the O-(3'-phospho-DNA)-tyrosine intermediate in catalysis.

It belongs to the 'phage' integrase family.

Integrase is necessary for integration of the phage into the host genome by site-specific recombination. In conjunction with excisionase, integrase is also necessary for excision of the prophage from the host genome. This is Putative prophage phiRv2 integrase from Mycobacterium tuberculosis (strain CDC 1551 / Oshkosh).